The chain runs to 1226 residues: DNA-directed RNA polymerase subunit beta (1226 aa).

It belongs to the RNA polymerase beta chain family. As to quaternary structure, the RNAP catalytic core consists of 2 alpha, 1 beta, 1 beta' and 1 omega subunit. When a sigma factor is associated with the core the holoenzyme is formed, which can initiate transcription.

It catalyses the reaction RNA(n) + a ribonucleoside 5'-triphosphate = RNA(n+1) + diphosphate. DNA-dependent RNA polymerase catalyzes the transcription of DNA into RNA using the four ribonucleoside triphosphates as substrates. The sequence is that of DNA-directed RNA polymerase subunit beta from Leptospira borgpetersenii serovar Hardjo-bovis (strain JB197).